The sequence spans 438 residues: MGLSMDRSPYSRTGDRDRGCWYYLRYFFLFVSLIQFLIILGLVLFMIYGNVHATTESSLRATEIRADNLYSQVVGLSAAQANLSKQLNISTLVKDTVMQQLLTTRREVERINASFRQCQGDLITYINYNRFIAAIILSEKQCQEQLKEGNKTCEALLFKLGEKVKTLEMEVVKEKAVCSKDKDSLLAGKRQAEMQQEACGKAREQQKQDQQVTEEQLRKVQSLCLPLDQEKFQADVLNVWRDSLVYRSLDNIGYHYSLMPEFSSLRRTCESLPGIMTTKVEELARGLRAGIERVTRENGELRRQKLELERAIQGEREARTRAGTEAQARETQLRTECARQTQLALEEKAALRTQRDDLERQLEARKRELEQLRTEVDVRISALDTCVKAKSLPAIQPRLPGPPPNPPPIDPASLEEFKKRILESQRPPLVNPAVPPSG.

The Cytoplasmic segment spans residues 1–26; that stretch reads MGLSMDRSPYSRTGDRDRGCWYYLRY. A helical; Signal-anchor for type II membrane protein transmembrane segment spans residues 27–47; sequence FFLFVSLIQFLIILGLVLFMI. Over 48-438 the chain is Extracellular; it reads YGNVHATTES…LVNPAVPPSG (391 aa). Residues Asn-82, Asn-88, Asn-112, and Asn-150 are each glycosylated (N-linked (GlcNAc...) asparagine). A coiled-coil region spans residues 289-383; that stretch reads AGIERVTREN…TEVDVRISAL (95 aa). Residues 393-438 are disordered; that stretch reads PAIQPRLPGPPPNPPPIDPASLEEFKKRILESQRPPLVNPAVPPSG. Pro residues-rich tracts occupy residues 399 to 410 and 429 to 438; these read LPGPPPNPPPID and LVNPAVPPSG.

Homodimer. In terms of tissue distribution, expressed in lung (alveolar endothelial and bronchial epithelial cells), kidney (endothelium of peritubular capillaries), spleen, liver, adrenal (endothelial cells of the zona reticularis of the cortex and chromaffin cells in the medulla), pancreas (islets of Langerhans), testis (germ cells, interstitial cells in neonatal testis and spermatids), ovary (stromal endothelial, thecal layer of developing follicles, luteal cells within the corpus luteum), intestine (endothelium of capillaries of the intestinal villi) and pituitary (pituicyte cells in the neural lobe) (at protein level). Expressed in lung, kidney, spleen, liver, adrenal, testis, heart, muscle, pituitary, thyroid and ovary.

The protein resides in the cell membrane. It is found in the membrane. The protein localises to the caveola. It localises to the cytoplasm. Its subcellular location is the perinuclear region. Endothelial cell-specific membrane protein involved in the formation of the diaphragms that bridge endothelial fenestrae. It is also required for the formation of stomata of caveolae and transendothelial channels. Functions in microvascular permeability, endothelial fenestrae contributing to the passage of water and solutes and regulating transcellular versus paracellular flow in different organs. Plays a specific role in embryonic development. The sequence is that of Plasmalemma vesicle-associated protein (Plvap) from Rattus norvegicus (Rat).